The following is a 295-amino-acid chain: Ankyrin repeat and SOCS box protein 17 (295 aa).

The ANK repeat unit spans residues 146–176 (SGITPLLYVAQTRQSNILKILLQYGILEREK). The 53-residue stretch at 243–295 (DYIPPTRYKDPCELVHLCRITIRTQLLANNMLPNGIFSLLIPTRLQNFLNLES) folds into the SOCS box domain.

Belongs to the ankyrin SOCS box (ASB) family. As to expression, specifically expressed in testis. Localizes to spermatogenic cells in testis, with highest expression in round spermatids and condensing spermatids and lower expression in pachytene spermatocytes.

It functions in the pathway protein modification; protein ubiquitination. In terms of biological role, may be a substrate-recognition component of a SCF-like ECS (Elongin-Cullin-SOCS-box protein) E3 ubiquitin-protein ligase complex which mediates the ubiquitination and subsequent proteasomal degradation of target proteins. The chain is Ankyrin repeat and SOCS box protein 17 (Asb17) from Mus musculus (Mouse).